Here is a 481-residue protein sequence, read N- to C-terminus: Leukocyte immunoglobulin-like receptor subfamily A member 6 (481 aa).

The N-terminal stretch at 1–23 is a signal peptide; that stretch reads MTPALTALLCLGLSLGPRTRVQA. The Extracellular segment spans residues 24–447; that stretch reads GPFPKPTLWA…SHAKDYTVEN (424 aa). A disulfide bridge connects residues Cys49 and Cys98. Over residues 59-70 the composition is skewed to basic and acidic residues; it reads QLDKEGSPEPLD. A disordered region spans residues 59–78; it reads QLDKEGSPEPLDRNNPLEPK. A glycan (N-linked (GlcNAc...) asparagine) is linked at Asn139. 2 disulfides stabilise this stretch: Cys144–Cys196 and Cys245–Cys296. 2 Ig-like C2-type domains span residues 225-314 and 323-408; these read PSLL…DPLN and DTVS…HLLS. Asn301 and Asn340 each carry an N-linked (GlcNAc...) asparagine glycan. Cys345 and Cys396 are disulfide-bonded. Residues 419-439 form a disordered region; sequence SGHSGGSSLPPTGPPSTPASH. The chain crosses the membrane as a helical span at residues 448 to 468; sequence LIRMGMAGLVLVFLGILLFEA. The Cytoplasmic portion of the chain corresponds to 469-481; that stretch reads QHSQRNPQDAAGR.

It localises to the membrane. Functionally, may act as receptor for class I MHC antigens. This chain is Leukocyte immunoglobulin-like receptor subfamily A member 6 (LILRA6), found in Homo sapiens (Human).